Reading from the N-terminus, the 636-residue chain is Translation factor GUF1 homolog, chloroplastic (636 aa).

The tr-type G domain maps to 31-212 (NLARNFSIIA…AIVTKIPPPQ (182 aa)). GTP is bound by residues 40–47 (AHIDHGKS), 105–109 (DTPGH), and 159–162 (NKID).

Belongs to the TRAFAC class translation factor GTPase superfamily. Classic translation factor GTPase family. LepA subfamily.

It is found in the plastid. The protein localises to the chloroplast. It carries out the reaction GTP + H2O = GDP + phosphate + H(+). Functionally, promotes chloroplast protein synthesis. May act as a fidelity factor of the translation reaction, by catalyzing a one-codon backward translocation of tRNAs on improperly translocated ribosomes. The sequence is that of Translation factor GUF1 homolog, chloroplastic from Oryza sativa subsp. indica (Rice).